The sequence spans 421 residues: 5-hydroxytryptamine receptor 2 (421 aa).

Residues 1 to 21 (MLCGRLRHTMNSTTCFFSHRT) are Extracellular-facing. An N-linked (GlcNAc...) asparagine glycan is attached at asparagine 11. A helical membrane pass occupies residues 22-42 (VLIGIVGSLIIAVSVVGNVLV). Residues 43-59 (CLAIFTEPILSHSKSKF) are Cytoplasmic-facing. The helical transmembrane segment at 60-79 (FIVSLAVADLLLALLVMTFA) threads the bilayer. Over 80–95 (LVNSLYGYWLFGETFC) the chain is Extracellular. Cysteine 95 and cysteine 210 form a disulfide bridge. The helical transmembrane segment at 96-118 (FIWMSADVMCETASIFSICVISY) threads the bilayer. The Cytoplasmic portion of the chain corresponds to 119-138 (NRLKQVQKPLQYEEFMTTTR). A helical membrane pass occupies residues 139–160 (ALLIIASLWICSFVVSFVPFFL). Residues 161-213 (EWHELSMEEIKTIFKDLISDKVKTSDAHTFSFALEQTLGDNRTSNPKPECLFD) lie on the Extracellular side of the membrane. The chain crosses the membrane as a helical span at residues 214–234 (VHFIYSVIYSLFCFYIPCTLM). Over 235–274 (LRNYLRLFLIAKKHHVRIKNLHRLHRNQGTQGSKAARTLT) the chain is Cytoplasmic. Residues 275-295 (IITGTFLACWLPFFIINPIEA) traverse the membrane as a helical segment. Residues 296–304 (VDEHLIPLE) lie on the Extracellular side of the membrane. A helical membrane pass occupies residues 305–325 (CFMVTIWLGYFNSCVNPIIYG). At 326–421 (TSNSKFRAAF…MLSESDTVFS (96 aa)) the chain is on the cytoplasmic side.

It belongs to the G-protein coupled receptor 1 family. As to expression, central nervous system.

Its subcellular location is the cell membrane. Its function is as follows. This is one of the several different receptors for 5-hydroxytryptamine (serotonin). 5-HT plays important roles in various behavioral and physiological processes in aplysia. These include feeding, locomotion, circadian rhythm, learning and memory, synaptic plasticity, and synaptic growth. This receptor is mediated by G proteins that stimulate phospholipase C. The polypeptide is 5-hydroxytryptamine receptor 2 (5HTB2) (Aplysia californica (California sea hare)).